A 681-amino-acid polypeptide reads, in one-letter code: Mitosis inhibitor nif1 (681 aa).

The interval 22 to 43 (LNKKDGNDDDKAEHSKRSGYHG) is disordered. Basic and acidic residues predominate over residues 23 to 37 (NKKDGNDDDKAEHSK). Ser70 bears the Phosphoserine mark. Disordered regions lie at residues 80–104 (TTSGSSSDLLNIESPASPAEASSPF) and 182–324 (YYHE…SSRQ). The span at 92–103 (ESPASPAEASSP) shows a compositional bias: low complexity. Positions 191 to 203 (TASNTSPTPNSIK) are enriched in polar residues. The residue at position 196 (Ser196) is a Phosphoserine. Residues 238-278 (SSGDSTPLSGSSSSKGMLMSMSTSENHSLSSNPELSNSNLL) are compositionally biased toward low complexity. A compositionally biased stretch (basic and acidic residues) spans 296–306 (SSKEPDKEHST). 2 Sel1-like repeats span residues 547–582 (ALILYELGVCFMHGWGITRDRYLALHLIKLSGAWGD) and 583–618 (ADAQFEAGLQMSLGAVSDKDSHMAAYYYRLAGFQGI).

The protein localises to the cytoplasm. Functionally, functions as a negative regulator of mitosis. It interacts with the C-terminal of nim1, thereby inhibiting its kinase activity which phosphorylates wee1. In Schizosaccharomyces pombe (strain 972 / ATCC 24843) (Fission yeast), this protein is Mitosis inhibitor nif1 (nif1).